The primary structure comprises 156 residues: UPF0266 membrane protein YobD (156 aa).

Topologically, residues M1–D5 are periplasmic. A helical membrane pass occupies residues L6–M26. Topologically, residues P27–R44 are cytoplasmic. The helical transmembrane segment at V45–H65 threads the bilayer. Residue G66 is a topological domain, periplasmic. The helical transmembrane segment at A67–I87 threads the bilayer. At R88 to I156 the chain is on the cytoplasmic side.

This sequence belongs to the UPF0266 family.

It localises to the cell inner membrane. The sequence is that of UPF0266 membrane protein YobD (yobD) from Salmonella typhimurium (strain LT2 / SGSC1412 / ATCC 700720).